The primary structure comprises 230 residues: Cytidylate kinase (230 aa).

12-20 is a binding site for ATP; the sequence is GPSGAGKGT.

It belongs to the cytidylate kinase family. Type 1 subfamily.

Its subcellular location is the cytoplasm. The enzyme catalyses CMP + ATP = CDP + ADP. It catalyses the reaction dCMP + ATP = dCDP + ADP. The protein is Cytidylate kinase of Shewanella sp. (strain MR-4).